The following is a 106-amino-acid chain: Phosphoribosyl-ATP pyrophosphatase (106 aa).

It belongs to the PRA-PH family.

It is found in the cytoplasm. The catalysed reaction is 1-(5-phospho-beta-D-ribosyl)-ATP + H2O = 1-(5-phospho-beta-D-ribosyl)-5'-AMP + diphosphate + H(+). It participates in amino-acid biosynthesis; L-histidine biosynthesis; L-histidine from 5-phospho-alpha-D-ribose 1-diphosphate: step 2/9. This chain is Phosphoribosyl-ATP pyrophosphatase, found in Rhizorhabdus wittichii (strain DSM 6014 / CCUG 31198 / JCM 15750 / NBRC 105917 / EY 4224 / RW1) (Sphingomonas wittichii).